A 777-amino-acid polypeptide reads, in one-letter code: Subtilisin-like protease SBT3.3 (777 aa).

Residues 1 to 24 form the signal peptide; that stretch reads MRSFRSSILLVLLSLITVLNATRA. The propeptide at 25–111 is removed in mature form; it reads RSETESKVHI…VIPDGFHELA (87 aa). The Inhibitor I9 domain occupies 32–109; the sequence is VHIVYLGEKK…VHVIPDGFHE (78 aa). Positions 115-624 constitute a Peptidase S8 domain; the sequence is TWEYLGLSSA…GGIVNPEKAA (510 aa). A glycan (N-linked (GlcNAc...) asparagine) is linked at asparagine 131. The Charge relay system role is filled by aspartate 145. N-linked (GlcNAc...) asparagine glycosylation is present at asparagine 204. The active-site Charge relay system is histidine 220. Residues asparagine 235, asparagine 397, asparagine 412, asparagine 508, and asparagine 540 are each glycosylated (N-linked (GlcNAc...) asparagine). One can recognise a PA domain in the interval 403–481; sequence VCESLNLNPN…ELGTDILSYI (79 aa). Serine 555 serves as the catalytic Charge relay system. N-linked (GlcNAc...) asparagine glycosylation is present at asparagine 647.

Belongs to the peptidase S8 family.

Its subcellular location is the secreted. It is found in the extracellular space. The protein resides in the extracellular matrix. Functionally, serine protease that plays a role in the control of the establishment of immune priming and systemic induced resistance. This chain is Subtilisin-like protease SBT3.3, found in Arabidopsis thaliana (Mouse-ear cress).